We begin with the raw amino-acid sequence, 277 residues long: 5'-nucleotidase SurE (277 aa).

Residues aspartate 14, aspartate 15, serine 46, and asparagine 104 each coordinate a divalent metal cation.

The protein belongs to the SurE nucleotidase family. Requires a divalent metal cation as cofactor.

The protein resides in the cytoplasm. The enzyme catalyses a ribonucleoside 5'-phosphate + H2O = a ribonucleoside + phosphate. Nucleotidase that shows phosphatase activity on nucleoside 5'-monophosphates. This Picosynechococcus sp. (strain ATCC 27264 / PCC 7002 / PR-6) (Agmenellum quadruplicatum) protein is 5'-nucleotidase SurE.